We begin with the raw amino-acid sequence, 432 residues long: UDP-N-acetylmuramate--L-alanine ligase (432 aa).

An ATP-binding site is contributed by 108 to 114; the sequence is GAHGKTS.

Belongs to the MurCDEF family.

It is found in the cytoplasm. It carries out the reaction UDP-N-acetyl-alpha-D-muramate + L-alanine + ATP = UDP-N-acetyl-alpha-D-muramoyl-L-alanine + ADP + phosphate + H(+). It participates in cell wall biogenesis; peptidoglycan biosynthesis. Cell wall formation. The sequence is that of UDP-N-acetylmuramate--L-alanine ligase from Bacillus licheniformis (strain ATCC 14580 / DSM 13 / JCM 2505 / CCUG 7422 / NBRC 12200 / NCIMB 9375 / NCTC 10341 / NRRL NRS-1264 / Gibson 46).